The primary structure comprises 248 residues: Triosephosphate isomerase (248 aa).

9–11 (NWK) contacts substrate. Residue His-94 is the Electrophile of the active site. Glu-166 serves as the catalytic Proton acceptor. Residues Gly-172, Ser-212, and 233–234 (GG) contribute to the substrate site.

It belongs to the triosephosphate isomerase family. Homodimer.

Its subcellular location is the cytoplasm. It carries out the reaction D-glyceraldehyde 3-phosphate = dihydroxyacetone phosphate. The protein operates within carbohydrate biosynthesis; gluconeogenesis. Its pathway is carbohydrate degradation; glycolysis; D-glyceraldehyde 3-phosphate from glycerone phosphate: step 1/1. In terms of biological role, involved in the gluconeogenesis. Catalyzes stereospecifically the conversion of dihydroxyacetone phosphate (DHAP) to D-glyceraldehyde-3-phosphate (G3P). The sequence is that of Triosephosphate isomerase from Clostridium botulinum (strain Okra / Type B1).